Here is a 200-residue protein sequence, read N- to C-terminus: NAD(P)H dehydrogenase (quinone) (200 aa).

The 188-residue stretch at Val4–Val191 folds into the Flavodoxin-like domain. Residues Ser10 to Ile15 and Thr79 to Phe81 each bind FMN. Tyr12 provides a ligand contact to NAD(+). Trp99 is a substrate binding site. Residues Ser114–Gly120 and His135 contribute to the FMN site.

Belongs to the WrbA family. FMN is required as a cofactor.

It catalyses the reaction a quinone + NADH + H(+) = a quinol + NAD(+). The enzyme catalyses a quinone + NADPH + H(+) = a quinol + NADP(+). This Paraburkholderia phytofirmans (strain DSM 17436 / LMG 22146 / PsJN) (Burkholderia phytofirmans) protein is NAD(P)H dehydrogenase (quinone).